Here is a 375-residue protein sequence, read N- to C-terminus: Chaperone protein DnaJ (375 aa).

In terms of domain architecture, J spans Asp5–Gly70. The CR-type zinc finger occupies Gly136–Glu214. Cys149, Cys152, Cys166, Cys169, Cys188, Cys191, Cys202, and Cys205 together coordinate Zn(2+). CXXCXGXG motif repeat units lie at residues Cys149–Gly156, Cys166–Gly173, Cys188–Gly195, and Cys202–Gly209.

This sequence belongs to the DnaJ family. Homodimer. Zn(2+) serves as cofactor.

The protein localises to the cytoplasm. Its function is as follows. Participates actively in the response to hyperosmotic and heat shock by preventing the aggregation of stress-denatured proteins and by disaggregating proteins, also in an autonomous, DnaK-independent fashion. Unfolded proteins bind initially to DnaJ; upon interaction with the DnaJ-bound protein, DnaK hydrolyzes its bound ATP, resulting in the formation of a stable complex. GrpE releases ADP from DnaK; ATP binding to DnaK triggers the release of the substrate protein, thus completing the reaction cycle. Several rounds of ATP-dependent interactions between DnaJ, DnaK and GrpE are required for fully efficient folding. Also involved, together with DnaK and GrpE, in the DNA replication of plasmids through activation of initiation proteins. The protein is Chaperone protein DnaJ of Rhizobium johnstonii (strain DSM 114642 / LMG 32736 / 3841) (Rhizobium leguminosarum bv. viciae).